Consider the following 414-residue polypeptide: 3-oxoacyl-[acyl-carrier-protein] synthase 2 (414 aa).

A Ketosynthase family 3 (KS3) domain is found at 4 to 411; sequence NKRVVITGMG…GHNAVLVFKK (408 aa). Active-site for beta-ketoacyl synthase activity residues include Cys165, His304, and His341.

It belongs to the thiolase-like superfamily. Beta-ketoacyl-ACP synthases family.

It catalyses the reaction a fatty acyl-[ACP] + malonyl-[ACP] + H(+) = a 3-oxoacyl-[ACP] + holo-[ACP] + CO2. The enzyme catalyses (9Z)-hexadecenoyl-[ACP] + malonyl-[ACP] + H(+) = 3-oxo-(11Z)-octadecenoyl-[ACP] + holo-[ACP] + CO2. It functions in the pathway lipid metabolism; fatty acid biosynthesis. Involved in the type II fatty acid elongation cycle. Catalyzes the elongation of a wide range of acyl-ACP by the addition of two carbons from malonyl-ACP to an acyl acceptor. Can efficiently catalyze the conversion of palmitoleoyl-ACP (cis-hexadec-9-enoyl-ACP) to cis-vaccenoyl-ACP (cis-octadec-11-enoyl-ACP), an essential step in the thermal regulation of fatty acid composition. The sequence is that of 3-oxoacyl-[acyl-carrier-protein] synthase 2 (fabF) from Staphylococcus aureus (strain Mu50 / ATCC 700699).